The chain runs to 297 residues: 4-diphosphocytidyl-2-C-methyl-D-erythritol kinase (297 aa).

Active-site residues include Lys6 and Asp144.

The protein belongs to the GHMP kinase family. IspE subfamily.

The enzyme catalyses 4-CDP-2-C-methyl-D-erythritol + ATP = 4-CDP-2-C-methyl-D-erythritol 2-phosphate + ADP + H(+). It functions in the pathway isoprenoid biosynthesis; isopentenyl diphosphate biosynthesis via DXP pathway; isopentenyl diphosphate from 1-deoxy-D-xylulose 5-phosphate: step 3/6. Catalyzes the phosphorylation of the position 2 hydroxy group of 4-diphosphocytidyl-2C-methyl-D-erythritol. In Leptospira interrogans serogroup Icterohaemorrhagiae serovar Lai (strain 56601), this protein is 4-diphosphocytidyl-2-C-methyl-D-erythritol kinase.